The primary structure comprises 497 residues: G protein-coupled receptor gprM (497 aa).

An N-linked (GlcNAc...) asparagine glycan is attached at N3. 5 consecutive transmembrane segments (helical) span residues 66–86 (ISVAILPLCIFLLVSYAVLPV), 98–118 (FTLGICFMEASKIAFIIPLGV), 138–158 (CAFTGSLLLLGGWMVVVWSFL), 179–199 (WGALIFGWVVPAVGLTVMLIL), and 221–241 (YWIPIISFAVAALILQLATMA). The N-linked (GlcNAc...) asparagine glycan is linked to N259. A run of 2 helical transmembrane segments spans residues 293–313 (VTLVLIIIANVIFFSVTFIEL) and 357–377 (LLLAVLVLLSLVGFWNFILFA). N-linked (GlcNAc...) asparagine glycosylation occurs at N421. The tract at residues 428-497 (YKSPSPMVRS…APAVYREYDD (70 aa)) is disordered.

This sequence belongs to the G-protein coupled receptor GPR1/git3 family. As to quaternary structure, interacts with gpaA.

It localises to the cell membrane. Its function is as follows. G protein-coupled receptor that plays a role in conidiation and regulation of the biosynthesis of secondary metabolites such as dihydroxynaphthalene (DHN)-melanin, via interaction with the G-protein complex alpha subunit gpaA. This chain is G protein-coupled receptor gprM, found in Aspergillus fumigatus (strain CBS 144.89 / FGSC A1163 / CEA10) (Neosartorya fumigata).